Consider the following 2894-residue polypeptide: uncharacterized protein (2894 aa).

A helical transmembrane segment spans residues 8 to 28 (ISIFVFTILLLSNVSLGLNVS). PbH1 repeat units lie at residues 543-567 (EVRW…DISL), 2085-2107 (NYPL…SMLN), 2135-2156 (FGNI…VLYK), 2158-2180 (GNGI…YSKN), 2201-2223 (ISSI…LLEN), 2224-2244 (SSSS…YLKE), 2245-2266 (NYIS…EIVN), 2267-2289 (SSNV…AIFN), 2290-2311 (GENV…LSYG), 2341-2363 (LNNL…FIYS), 2367-2389 (ASNV…YIYG), 2390-2419 (VNAI…KISG), 2422-2444 (TKGV…SLEG), 2455-2477 (VENN…YIGG), 2479-2501 (VENV…LIQE), 2512-2542 (GTNI…TVGA), 2550-2582 (NGYI…EVYG), 2589-2611 (SLEF…LIGA), 2612-2633 (SKDI…TIPN), and 2638-2660 (PYNI…DLDD).

The protein resides in the membrane. This is an uncharacterized protein from Methanocaldococcus jannaschii (strain ATCC 43067 / DSM 2661 / JAL-1 / JCM 10045 / NBRC 100440) (Methanococcus jannaschii).